The following is a 56-amino-acid chain: MANIKAGKERTKIFGRGSHECLLCGRKQGLVRRYNIFFCRQCFREWAPKMGFKKLN.

The Zn(2+) site is built by Cys21, Cys24, Cys39, and Cys42.

It belongs to the universal ribosomal protein uS14 family. Zinc-binding uS14 subfamily. Part of the 30S ribosomal subunit. Requires Zn(2+) as cofactor.

Functionally, binds 16S rRNA, required for the assembly of 30S particles. The protein is Small ribosomal subunit protein uS14 of Methanospirillum hungatei JF-1 (strain ATCC 27890 / DSM 864 / NBRC 100397 / JF-1).